Reading from the N-terminus, the 146-residue chain is UPF0735 ACT domain-containing protein Cphy_3604 (146 aa).

Residues 70–145 (TFMLQMDDIP…GIHYLKILGR (76 aa)) form the ACT domain.

The protein belongs to the UPF0735 family.

This Lachnoclostridium phytofermentans (strain ATCC 700394 / DSM 18823 / ISDg) (Clostridium phytofermentans) protein is UPF0735 ACT domain-containing protein Cphy_3604.